The following is a 312-amino-acid chain: MAELACFVSFSLTEDKVKWFPINKKAVKTMLCAKVEKDQRSNYYDTILYGVAPPPEFRNRFKTTERYGLDYESDQYSEVANLLADVLNMVSMPTEKFQFDIVKTVVQVRHLENLLLRIKDTDDILSENVKLRVKAVMIACNLVNETETTPLTESNEIVYQDSYFTITKLDYSSHKLLPLMADEYKITINTKTDIPDRDQTAFAAYIRYNFNKFAAISHGKRHWRLVLHSQLMSHAERLDRKIKSDKKHGRQFAYDDGDMAFVHPGWKACIGQLCGGTTFEVAKTSLYSVKTSKTVRTATNKIESDLISMVGN.

ATP-binding positions include 107–109 (QVR), Lys185, and 218–220 (HGK). An RNA-binding region spans residues 202–238 (FAAYIRYNFNKFAAISHGKRHWRLVLHSQLMSHAERL). The active-site For NTPase and RTPase activities is the His222. Arg224 contacts ATP.

The protein belongs to the rotavirus NSP2 family. In terms of assembly, homooctamer. Interacts with VP1; this interaction is weak. Interacts with NSP5; this interaction leads to up-regulation of NSP5 phosphorylation and formation of viral factories. The cofactor is Mg(2+).

It is found in the host cytoplasm. Its function is as follows. Participates in replication and packaging of the viral genome. Plays a crucial role, together with NSP5, in the formation of virus factories (viroplasms) which are large inclusions in the host cytoplasm where replication intermediates are assembled and viral RNA replication takes place. Displays ssRNA binding, NTPase, RNA triphosphatase (RTPase) and ATP-independent helix-unwinding activities. The unwinding activity may prepare and organize plus-strand RNAs for packaging and replication by removing interfering secondary structures. The RTPase activity plays a role in the removal of the gamma-phosphate from the rotavirus RNA minus strands of dsRNA genome segments. The chain is Non-structural protein 2 from Rotavirus C (strain RVC/Pig/United States/Cowden/1980) (RV-C).